A 294-amino-acid polypeptide reads, in one-letter code: Eukaryotic translation initiation factor 3 subunit G (294 aa).

Disordered stretches follow at residues 1–43 and 160–211; these read MPSA…ENKI and EDDG…RDET. The segment covering 194 to 211 has biased composition (basic and acidic residues); the sequence is GANRRGETMPSRSQRDET. The region spanning 212 to 290 is the RRM domain; the sequence is ATIRVTNLSE…LILNVEWAKP (79 aa).

This sequence belongs to the eIF-3 subunit G family. As to quaternary structure, component of the eukaryotic translation initiation factor 3 (eIF-3) complex.

The protein resides in the cytoplasm. RNA-binding component of the eukaryotic translation initiation factor 3 (eIF-3) complex, which is involved in protein synthesis of a specialized repertoire of mRNAs and, together with other initiation factors, stimulates binding of mRNA and methionyl-tRNAi to the 40S ribosome. The eIF-3 complex specifically targets and initiates translation of a subset of mRNAs involved in cell proliferation. This subunit can bind 18S rRNA. This Nematostella vectensis (Starlet sea anemone) protein is Eukaryotic translation initiation factor 3 subunit G.